A 217-amino-acid polypeptide reads, in one-letter code: tRNA (guanine-N(7)-)-methyltransferase (217 aa).

S-adenosyl-L-methionine is bound by residues Glu44, Glu69, Asn96, and Asp118. The active site involves Asp118. Lys122 serves as a coordination point for substrate. The segment at 124–129 (RHEKRR) is interaction with RNA. Substrate-binding positions include Asp154 and 191–194 (TEYE).

The protein belongs to the class I-like SAM-binding methyltransferase superfamily. TrmB family.

The catalysed reaction is guanosine(46) in tRNA + S-adenosyl-L-methionine = N(7)-methylguanosine(46) in tRNA + S-adenosyl-L-homocysteine. It functions in the pathway tRNA modification; N(7)-methylguanine-tRNA biosynthesis. In terms of biological role, catalyzes the formation of N(7)-methylguanine at position 46 (m7G46) in tRNA. The sequence is that of tRNA (guanine-N(7)-)-methyltransferase from Geobacillus kaustophilus (strain HTA426).